The primary structure comprises 240 residues: 1-(5-phosphoribosyl)-5-[(5-phosphoribosylamino)methylideneamino] imidazole-4-carboxamide isomerase (240 aa).

The active-site Proton acceptor is the D8. D129 acts as the Proton donor in catalysis.

The protein belongs to the HisA/HisF family.

It is found in the cytoplasm. It carries out the reaction 1-(5-phospho-beta-D-ribosyl)-5-[(5-phospho-beta-D-ribosylamino)methylideneamino]imidazole-4-carboxamide = 5-[(5-phospho-1-deoxy-D-ribulos-1-ylimino)methylamino]-1-(5-phospho-beta-D-ribosyl)imidazole-4-carboxamide. The protein operates within amino-acid biosynthesis; L-histidine biosynthesis; L-histidine from 5-phospho-alpha-D-ribose 1-diphosphate: step 4/9. This is 1-(5-phosphoribosyl)-5-[(5-phosphoribosylamino)methylideneamino] imidazole-4-carboxamide isomerase from Listeria monocytogenes serotype 4b (strain CLIP80459).